Consider the following 159-residue polypeptide: bZIP transcription factor 11 (159 aa).

Positions 1–21 are enriched in low complexity; the sequence is MESSSSGTTSSTIQTSSGSEE. The tract at residues 1–47 is disordered; the sequence is MESSSSGTTSSTIQTSSGSEESLMEQRKRKRMLSNRESARRSRMKKQ. Residues 25–88 enclose the bZIP domain; that stretch reads EQRKRKRMLS…LTVEAENSVL (64 aa). The tract at residues 27–48 is basic motif; sequence RKRKRMLSNRESARRSRMKKQK. The interval 53–67 is leucine-zipper; that stretch reads LTAQVNHLKKENTEI.

Forms heterodimers with BZIP1, BZIP9, BZIP10, BZIP25 and BZIP63. Interacts with ADA2B. Highly expressed in stems and flowers. Expressed in root tips, cotyledons, leaf vasculature, embryos, apical parts of siliques and funiculi.

It localises to the nucleus. Transcription factor that binds to the DNA sequence 5'-ACTCAT-3' in target gene promoters. Promotes POX1/PRODH1 expression in response to hypoosmolarity stress. Positively regulates the expression of ASN1 and POX2/PRODH2 genes, which are involved in amino acid metabolism. Regulates several metabolic pathways such as myo-inositol, raffinose and trehalose. Regulates several trehalose metabolism genes, including TRE1, TPP5 and TPP6. Mediates recruitment of the histone acetylation machinery to activate auxin-induced transcription. Interacts with ADA2B adapter protein to promote ADA2B-mediated recruitment of SAGA-like histone acetyltransferase complexes to specific auxin-responsive genes. The chain is bZIP transcription factor 11 from Arabidopsis thaliana (Mouse-ear cress).